The following is a 218-amino-acid chain: N-(5'-phosphoribosyl)anthranilate isomerase (218 aa).

This sequence belongs to the TrpF family.

The catalysed reaction is N-(5-phospho-beta-D-ribosyl)anthranilate = 1-(2-carboxyphenylamino)-1-deoxy-D-ribulose 5-phosphate. It functions in the pathway amino-acid biosynthesis; L-tryptophan biosynthesis; L-tryptophan from chorismate: step 3/5. The protein is N-(5'-phosphoribosyl)anthranilate isomerase of Desulfatibacillum aliphaticivorans.